We begin with the raw amino-acid sequence, 617 residues long: Zinc finger protein 613 (617 aa).

The KRAB domain occupies 8-78; the sequence is LTLEDVAVEF…ENEIHSQICP (71 aa). C2H2-type zinc fingers lie at residues 204 to 226, 232 to 254, 260 to 282, 288 to 310, 316 to 338, 344 to 366, 372 to 394, 400 to 422, 428 to 450, 456 to 478, 484 to 506, and 512 to 535; these read HVCTECGKAFLKKSRLIYHQRVH, HGCSICGKAFSRKSGLTEHQRNH, YECTECDKAFRWKSQLNAHQKIH, YICSDCGKGFIKKSRLINHQRVH, HGCSLCGKAFSKRSRLTEHQRTH, YECTECDKAFRWKSQLNAHQKAH, YICRDCGKGFIQKGNLIVHQRIH, YICNECGKGFIQKGNLLIHRRTH, YVCNECGKGFSQKTCLISHQRFH, FVCTECGKSCSHKSGLINHQRIH, YTCSDCGKAFRDKSCLNRHRRTH, and YGCSDCGKAFSHLSCLVYHKGMLH.

The protein belongs to the krueppel C2H2-type zinc-finger protein family.

The protein localises to the nucleus. May be involved in transcriptional regulation. This is Zinc finger protein 613 (ZNF613) from Homo sapiens (Human).